The sequence spans 234 residues: dTDP-4-amino-4,6-dideoxyglucose formyltransferase (234 aa).

DTDP-4-amino-4,6-dideoxy-alpha-D-glucose-binding positions include Asn9 and 62–64 (HCK). (6R)-10-formyltetrahydrofolate is bound at residue 65–67 (QRF). His81 functions as the Proton acceptor in the catalytic mechanism. Residue 90–94 (GWFPQ) coordinates dTDP-4-amino-4,6-dideoxy-alpha-D-glucose. (6R)-10-formyltetrahydrofolate-binding residues include Asp112, Asp116, and Lys175. Asn209 is a dTDP-4-amino-4,6-dideoxy-alpha-D-glucose binding site.

The protein belongs to the dTDP-Qui4N formyltransferase family. In terms of assembly, homodimer.

The enzyme catalyses dTDP-4-amino-4,6-dideoxy-alpha-D-glucose + (6R)-10-formyltetrahydrofolate = dTDP-4-formamido-4,6-dideoxy-alpha-D-glucose + (6S)-5,6,7,8-tetrahydrofolate + H(+). Its function is as follows. Sugar N-formyltransferase that catalyzes the conversion of dTDP-4-amino-4,6-dideoxyglucose into dTDP-4-formamido-4,6-dideoxyglucose using N(10)-formyltetrahydrofolate as the carbon source. Plays a role in virulence. This is dTDP-4-amino-4,6-dideoxyglucose formyltransferase from Mycobacterium bovis (strain ATCC BAA-935 / AF2122/97).